Consider the following 1081-residue polypeptide: Probable cellulose synthase A catalytic subunit 8 [UDP-forming] (1081 aa).

The Cytoplasmic portion of the chain corresponds to 1–277 (MDGDADAVKS…PSSRINPYRM (277 aa)). Zn(2+)-binding residues include Cys19, Cys22, Cys38, Cys41, Cys46, Cys49, Cys61, and Cys64. The segment at 19–65 (CQICGDGVGTTAEGDVFAACDVCGFPVCRPCYEYERKDGTQACPQCK) adopts an RING-type; degenerate zinc-finger fold. The disordered stretch occupies residues 72–148 (KGSPAIRGEE…YDSGEIPRGY (77 aa)). Residues 81 to 91 (EGEDTDADDVS) are compositionally biased toward acidic residues. Residues 103-112 (QKQKIADRMR) are compositionally biased toward basic and acidic residues. Residues 278-298 (VIVLRLVVLSIFLHYRITNPV) form a helical membrane-spanning segment. Over 299 to 300 (RN) the chain is Extracellular. A helical transmembrane segment spans residues 301–321 (AYPLWLLSVICEIWFALSWIL). Residues 322 to 864 (DQFPKWFPIN…INTTIYPLTS (543 aa)) are Cytoplasmic-facing. UDP-alpha-D-glucose contacts are provided by Ser360, Lys366, Glu367, and Asp396. The active site involves Asp396. The stretch at 450–477 (VKDRRAMKREYEEFKVRINGLVAKAQKV) forms a coiled coil. Lys537 is a UDP-alpha-D-glucose binding site. Mn(2+) is bound by residues Lys538 and Asp562. Residues 660 to 684 (SLCGGRKKASKSKKKSSDKKKSNKH) are disordered. Basic residues predominate over residues 664–682 (GRKKASKSKKKSSDKKKSN). Asp781 is a catalytic residue. A helical transmembrane segment spans residues 865-885 (IPLLIYCVLPAICLLTGKFII). Residues 886–890 (PEISN) are Extracellular-facing. A helical transmembrane segment spans residues 891 to 911 (FASIWFISLFISIFATGILEM). Residues 912 to 926 (RWSGVGIDEWWRNEQ) lie on the Cytoplasmic side of the membrane. The chain crosses the membrane as a helical span at residues 927 to 947 (FWVIGGISAHLFAVFQGLLKV). Residues 948–977 (LAGIDTNFTVTSKASDEDGDFAELYMFKWT) lie on the Extracellular side of the membrane. N-linked (GlcNAc...) asparagine glycosylation occurs at Asn954. A helical transmembrane segment spans residues 978–998 (TLLIPPTTILIINLVGVVAGI). Over 999–1009 (SYAINSGYQSW) the chain is Cytoplasmic. The helical transmembrane segment at 1010–1030 (GPLFGKLFFAFWVIVHLYPFL) threads the bilayer. Residues 1031–1039 (KGLMGRQNR) lie on the Extracellular side of the membrane. Residues 1040–1060 (TPTIVVVWAILLASIFSLLWV) traverse the membrane as a helical segment. The Cytoplasmic segment spans residues 1061–1081 (RIDPFTTRVTGPDTQTCGINC).

The protein belongs to the glycosyltransferase 2 family. Plant cellulose synthase subfamily. The cofactor is Mn(2+). Zn(2+) is required as a cofactor.

It localises to the cell membrane. The enzyme catalyses [(1-&gt;4)-beta-D-glucosyl](n) + UDP-alpha-D-glucose = [(1-&gt;4)-beta-D-glucosyl](n+1) + UDP + H(+). It participates in glycan metabolism; plant cellulose biosynthesis. Probable catalytic subunit of cellulose synthase terminal complexes ('rosettes'), required for beta-1,4-glucan microfibril crystallization, a major mechanism of the cell wall formation. In Oryza sativa subsp. japonica (Rice), this protein is Probable cellulose synthase A catalytic subunit 8 [UDP-forming] (CESA8).